A 182-amino-acid polypeptide reads, in one-letter code: Protein Syd (182 aa).

The protein belongs to the Syd family.

It is found in the cell inner membrane. Its function is as follows. Interacts with the SecY protein in vivo. May bind preferentially to an uncomplexed state of SecY, thus functioning either as a chelating agent for excess SecY in the cell or as a regulatory factor that negatively controls the translocase function. This Aliivibrio salmonicida (strain LFI1238) (Vibrio salmonicida (strain LFI1238)) protein is Protein Syd.